We begin with the raw amino-acid sequence, 193 residues long: MIGRIAGILLEKNPPHLLVDCNGVGYEIDVPMSTFYNLPQTGERVVLLTQQIVREDAHLLYGFLTPQERTTFRELLKITGIGARMALAVLSGMSVQELAQAVTMQDAARLTRLPGIGKKTAERLLLELKGKLGADLGALAGAASPSDHAADILNALVALGYSEKEGLAAIKNVPAGTGVSDGIKLALKALSKA.

A domain I region spans residues 1 to 64 (MIGRIAGILL…EDAHLLYGFL (64 aa)). A domain II region spans residues 65–139 (TPQERTTFRE…GKLGADLGAL (75 aa)). A flexible linker region spans residues 139 to 143 (LAGAA). The domain III stretch occupies residues 144–193 (SPSDHAADILNALVALGYSEKEGLAAIKNVPAGTGVSDGIKLALKALSKA).

It belongs to the RuvA family. Homotetramer. Forms an RuvA(8)-RuvB(12)-Holliday junction (HJ) complex. HJ DNA is sandwiched between 2 RuvA tetramers; dsDNA enters through RuvA and exits via RuvB. An RuvB hexamer assembles on each DNA strand where it exits the tetramer. Each RuvB hexamer is contacted by two RuvA subunits (via domain III) on 2 adjacent RuvB subunits; this complex drives branch migration. In the full resolvosome a probable DNA-RuvA(4)-RuvB(12)-RuvC(2) complex forms which resolves the HJ.

It localises to the cytoplasm. The RuvA-RuvB-RuvC complex processes Holliday junction (HJ) DNA during genetic recombination and DNA repair, while the RuvA-RuvB complex plays an important role in the rescue of blocked DNA replication forks via replication fork reversal (RFR). RuvA specifically binds to HJ cruciform DNA, conferring on it an open structure. The RuvB hexamer acts as an ATP-dependent pump, pulling dsDNA into and through the RuvAB complex. HJ branch migration allows RuvC to scan DNA until it finds its consensus sequence, where it cleaves and resolves the cruciform DNA. The protein is Holliday junction branch migration complex subunit RuvA of Burkholderia vietnamiensis (strain G4 / LMG 22486) (Burkholderia cepacia (strain R1808)).